A 296-amino-acid polypeptide reads, in one-letter code: Glycine N-acyltransferase-like protein (296 aa).

Lys-41 bears the N6-acetyllysine; alternate mark. Lys-41 carries the N6-succinyllysine; alternate modification. Lys-43 carries the post-translational modification N6-acetyllysine. Position 48 is an N6-acetyllysine; alternate (Lys-48). Residue Lys-48 is modified to N6-succinyllysine; alternate. An N6-acetyllysine mark is found at Lys-80 and Lys-83. Residues Lys-183 and Lys-256 each carry the N6-acetyllysine; alternate modification. 2 positions are modified to N6-succinyllysine; alternate: Lys-183 and Lys-256.

The protein belongs to the glycine N-acyltransferase family.

Its subcellular location is the mitochondrion. The enzyme catalyses an acyl-CoA + glycine = an N-acylglycine + CoA + H(+). Its function is as follows. Mitochondrial acyltransferase which transfers the acyl group to the N-terminus of glycine. Can conjugate a multitude of substrates to form a variety of N-acylglycines. In Mus musculus (Mouse), this protein is Glycine N-acyltransferase-like protein (Gm4952).